The primary structure comprises 1139 residues: Protein kinase C-like (1139 aa).

One can recognise an REM-1 1 domain in the interval 1 to 67 (MNEDEAIQNI…LRDIQLRKVG (67 aa)). Residues 72 to 132 (GMSLGADDAG…PGPGAASKAR (61 aa)) are disordered. Residues 142 to 219 (KYDTPYLGPR…LKRYEELHVD (78 aa)) form the REM-1 2 domain. Positions 225 to 343 (AQDDDSINTP…MRRKRIEAEM (119 aa)) constitute a C2 domain. Residues 349 to 404 (VSADRMGSTGAPSQFPMSPTSGSFGGSPQAPGGGQGQAPGPFGDPAPQPQVVTGPI) are disordered. Positions 358–368 (GAPSQFPMSPT) are enriched in polar residues. 2 consecutive Phorbol-ester/DAG-type zinc fingers follow at residues 454-502 (GHKF…VTKC) and 522-572 (PHRF…PDFC). 3 disordered regions span residues 590–637 (KQRQ…TPSA), 649–668 (QTSP…LSAA), and 679–804 (QGRT…TDPG). Positions 594 to 614 (QKTTSLSEKTLRSGATKSPTT) are enriched in polar residues. A compositionally biased stretch (low complexity) spans 615 to 629 (AGHGSSASFSSAGAG). Composition is skewed to pro residues over residues 723–734 (AQPPAQQRPPQP) and 743–760 (AQMP…PPQP). Over residues 761–793 (GQQYQQQQPAAQKPQPQPPATAQGAAAGPPGSQ) the composition is skewed to low complexity. Positions 814-1073 (FNFLAVLGKG…AQEVMSQPFF (260 aa)) constitute a Protein kinase domain. ATP is bound by residues 820–828 (LGKGNFGKV) and Lys-843. Residue Asp-939 is the Proton acceptor of the active site. The AGC-kinase C-terminal domain maps to 1074–1139 (RNINWDDIYH…RGFSYTADLD (66 aa)).

The protein belongs to the protein kinase superfamily. AGC Ser/Thr protein kinase family. PKC subfamily.

The enzyme catalyses L-seryl-[protein] + ATP = O-phospho-L-seryl-[protein] + ADP + H(+). It catalyses the reaction L-threonyl-[protein] + ATP = O-phospho-L-threonyl-[protein] + ADP + H(+). With respect to regulation, stimulated about twofold by phospholipids or phorbol esters. The polypeptide is Protein kinase C-like (pkc1) (Hypocrea jecorina (Trichoderma reesei)).